An 824-amino-acid chain; its full sequence is MTRKSNYNYLDEDNIEDESPIGLGTSPIEFNLDKENKNKKRNSVKFNLDTPLPIINNKSSQDNNNKNNNNNNNNNNNNNNNNNNNNNNNNNNKNNKNKINNSLNSITPYLVDYKDDFDFKRSVYDFDDVDYLEEDSFDEHSFYKTSYSTRRCIYRILTYIRPQIWYFVFAFLALSITTLCQLALPYCFANGIQEAIRVNLTVNSVNSTDNNIIITPTPTPNITTTTTNPTVLESITSKYTSLFGNTEYDFKWIIIIVLVQTPFLFARYLLFTMAGFSVVTKLKRDLFKSLLTQEVSYFDSNRTGDLKAVIASDSSILQNCITVSLSTLVRCSLQLIGGLLILVFLSWKVTLLMISFLVILLISFLVFKKWIHPKYNYIQEKLVNIGLIIDDSIGNIKEIRLLNAESKELRSFETELEILHRSSRSFVLMNAFWISFGSLLVMGTIIGIYGFAMSQTLSNSILLLQFILYSLMITASMNGLIGSINEIQKLISSSKRIFSLIDRKPIVHFQGGITPSTDSNISFDNVYFNNNNNNSNNNNNNNNNNKNNNGMILSNVSFIVNKGQWLSLVGPSQSKEFIFSLIQGLYYPTRGTVFIGRIDTKVLDLYFFRSRLFTISPLQTVIFDGTVEQNIRYGLSHLSTQNIIDASKKANLHDFVIGLPHGYDSMIGKNNFFDPIQILKISIARAFLRNPSVLLLDETTLPFDSKEIEDSIELLVQNKTVIAIANKLSTLKRSNNILVFDDNRIIERGTHSELSQKSTSFYVTSVLNSINNKYNNNNNNNNNNNNNNNNNNNNNNNNNNNNNNNNNNNNINNNNKIEIYLFLI.

The disordered stretch occupies residues 41–101 (RNSVKFNLDT…NKNNKNKINN (61 aa)). The span at 63-101 (NNNKNNNNNNNNNNNNNNNNNNNNNNNNNNKNNKNKINN) shows a compositional bias: low complexity. 6 consecutive transmembrane segments (helical) span residues 164–184 (IWYFVFAFLALSITTLCQLAL), 252–272 (WIIIIVLVQTPFLFARYLLFT), 325–345 (LSTLVRCSLQLIGGLLILVFL), 347–367 (WKVTLLMISFLVILLISFLVF), 431–451 (AFWISFGSLLVMGTIIGIYGF), and 461–481 (ILLLQFILYSLMITASMNGLI). In terms of domain architecture, ABC transmembrane type-1 spans 167–489 (FVFAFLALSI…LIGSINEIQK (323 aa)). In terms of domain architecture, ABC transporter spans 521–767 (ISFDNVYFNN…STSFYVTSVL (247 aa)). 570–576 (GPSQSKE) lines the ATP pocket. Positions 772–813 (NKYNNNNNNNNNNNNNNNNNNNNNNNNNNNNNNNNNNNNINN) are disordered.

It belongs to the ABC transporter superfamily. ABCB family.

It is found in the membrane. The chain is ABC transporter B family member 7 (abcB7) from Dictyostelium discoideum (Social amoeba).